We begin with the raw amino-acid sequence, 228 residues long: Carboxylesterase SOBER1 (228 aa).

Residues S106, D160, and H192 each act as charge relay system in the active site.

This sequence belongs to the AB hydrolase superfamily. AB hydrolase 2 family.

Its function is as follows. Possesses carboxylesterase activity in vitro with a preference for short acyl chain substrates. Functions as a negative regulator of the hypersensitive response (HR) triggered by the bacterial type III effector protein AvrBsT. Possesses phospholipase A2 (PLA2) activity and hydrolyzes phosphatidylcholine (PC), a lipid that is hydrolyzed by phospholipase D (PLD) to produce phosphatidic acid (PA). Required to suppress AvrBsT-dependent HR and PLD-dependent production of PA in response to AvrBsT elicitation. The sequence is that of Carboxylesterase SOBER1 from Arabidopsis thaliana (Mouse-ear cress).